Reading from the N-terminus, the 289-residue chain is CCR4-associated factor 16 (289 aa).

Residues 7–249 (IEVRNLTYKF…SEVVNAKVNG (243 aa)) enclose the ABC transporter domain. 41-48 (GANGAGKS) contributes to the ATP binding site.

Belongs to the ABC transporter superfamily. In terms of assembly, interacts with CCR4 and SSN2.

It localises to the cytoplasm. The protein localises to the nucleus. This chain is CCR4-associated factor 16 (CAF16), found in Saccharomyces cerevisiae (strain ATCC 204508 / S288c) (Baker's yeast).